The following is a 333-amino-acid chain: Holliday junction branch migration complex subunit RuvB (333 aa).

The interval 1–182 (MDERLLSGES…FGVLSRLEYY (182 aa)) is large ATPase domain (RuvB-L). Residues Leu-21, Arg-22, Gly-63, Lys-66, Thr-67, Thr-68, 129–131 (EDF), Arg-172, Tyr-182, and Arg-219 contribute to the ATP site. A Mg(2+)-binding site is contributed by Thr-67. The small ATPAse domain (RuvB-S) stretch occupies residues 183 to 253 (TVDQLSEIVE…ITQMALELLQ (71 aa)). The segment at 256 to 333 (KLGLDHIDHK…EHFGMEMPKV (78 aa)) is head domain (RuvB-H). DNA contacts are provided by Arg-311 and Arg-316.

It belongs to the RuvB family. In terms of assembly, homohexamer. Forms an RuvA(8)-RuvB(12)-Holliday junction (HJ) complex. HJ DNA is sandwiched between 2 RuvA tetramers; dsDNA enters through RuvA and exits via RuvB. An RuvB hexamer assembles on each DNA strand where it exits the tetramer. Each RuvB hexamer is contacted by two RuvA subunits (via domain III) on 2 adjacent RuvB subunits; this complex drives branch migration. In the full resolvosome a probable DNA-RuvA(4)-RuvB(12)-RuvC(2) complex forms which resolves the HJ.

The protein localises to the cytoplasm. The enzyme catalyses ATP + H2O = ADP + phosphate + H(+). The RuvA-RuvB-RuvC complex processes Holliday junction (HJ) DNA during genetic recombination and DNA repair, while the RuvA-RuvB complex plays an important role in the rescue of blocked DNA replication forks via replication fork reversal (RFR). RuvA specifically binds to HJ cruciform DNA, conferring on it an open structure. The RuvB hexamer acts as an ATP-dependent pump, pulling dsDNA into and through the RuvAB complex. RuvB forms 2 homohexamers on either side of HJ DNA bound by 1 or 2 RuvA tetramers; 4 subunits per hexamer contact DNA at a time. Coordinated motions by a converter formed by DNA-disengaged RuvB subunits stimulates ATP hydrolysis and nucleotide exchange. Immobilization of the converter enables RuvB to convert the ATP-contained energy into a lever motion, pulling 2 nucleotides of DNA out of the RuvA tetramer per ATP hydrolyzed, thus driving DNA branch migration. The RuvB motors rotate together with the DNA substrate, which together with the progressing nucleotide cycle form the mechanistic basis for DNA recombination by continuous HJ branch migration. Branch migration allows RuvC to scan DNA until it finds its consensus sequence, where it cleaves and resolves cruciform DNA. The polypeptide is Holliday junction branch migration complex subunit RuvB (Bacillus cereus (strain ATCC 10987 / NRS 248)).